A 154-amino-acid polypeptide reads, in one-letter code: MRDLTTAMSDLPRDLEEEVLSRVQLASLRAVRTTCKKWNRRLSKYRFTKKYIRKSRSATADKEFLAIMMLDSSLYLMNVVIDKIDNENNVESSIERKGKLISVNDADGVDIISVVHYNALLLCLTKEKTPKACGLEPLSWAIKVDRNCLSLRFI.

The F-box domain occupies 5–51 (TTAMSDLPRDLEEEVLSRVQLASLRAVRTTCKKWNRRLSKYRFTKKY).

This Arabidopsis thaliana (Mouse-ear cress) protein is Putative F-box protein At2g11200.